A 94-amino-acid chain; its full sequence is DNA-directed RNA polymerase subunit omega (94 aa).

This sequence belongs to the RNA polymerase subunit omega family. As to quaternary structure, the RNAP catalytic core consists of 2 alpha, 1 beta, 1 beta' and 1 omega subunit. When a sigma factor is associated with the core the holoenzyme is formed, which can initiate transcription.

The catalysed reaction is RNA(n) + a ribonucleoside 5'-triphosphate = RNA(n+1) + diphosphate. Functionally, promotes RNA polymerase assembly. Latches the N- and C-terminal regions of the beta' subunit thereby facilitating its interaction with the beta and alpha subunits. In Bifidobacterium longum (strain DJO10A), this protein is DNA-directed RNA polymerase subunit omega.